A 329-amino-acid chain; its full sequence is Diaminopimelate epimerase (329 aa).

Asn-14 and Asn-73 together coordinate substrate. The Proton donor role is filled by Cys-82. Substrate is bound by residues 83–84, Asn-170, Asn-206, and 224–225; these read GN and ER. The active-site Proton acceptor is the Cys-233. A substrate-binding site is contributed by 234 to 235; that stretch reads GT.

It belongs to the diaminopimelate epimerase family. As to quaternary structure, homodimer.

It is found in the cytoplasm. The catalysed reaction is (2S,6S)-2,6-diaminopimelate = meso-2,6-diaminopimelate. Its pathway is amino-acid biosynthesis; L-lysine biosynthesis via DAP pathway; DL-2,6-diaminopimelate from LL-2,6-diaminopimelate: step 1/1. Functionally, catalyzes the stereoinversion of LL-2,6-diaminopimelate (L,L-DAP) to meso-diaminopimelate (meso-DAP), a precursor of L-lysine and an essential component of the bacterial peptidoglycan. This chain is Diaminopimelate epimerase, found in Listeria monocytogenes serotype 4a (strain HCC23).